A 70-amino-acid polypeptide reads, in one-letter code: Virion membrane protein OPG139 (70 aa).

Residues 1–21 traverse the membrane as a helical segment; it reads MIGILLLIGICVAVTVAILYS. The Virion surface segment spans residues 22–70; it reads MYNKIKNSQNPNPSPNLNSPPPEPKNTKFVNNLEKDHISSLYNLVKSSV. Positions 30–50 are disordered; sequence QNPNPSPNLNSPPPEPKNTKF. A compositionally biased stretch (pro residues) spans 33–45; sequence NPSPNLNSPPPEP. Residue Ser40 is modified to Phosphoserine; by host.

The protein belongs to the orthopoxvirus OPG139 family. Post-translationally, phosphorylated by a OPG054-independent mechanism.

It is found in the virion membrane. Its function is as follows. Essential for the encapsidation of DNA into immature virions (IV) and the subsequent maturation of IV into mature virions (MV). The sequence is that of Virion membrane protein OPG139 (OPG139) from Homo sapiens (Human).